A 239-amino-acid chain; its full sequence is 1-(5-phosphoribosyl)-5-[(5-phosphoribosylamino)methylideneamino] imidazole-4-carboxamide isomerase (239 aa).

The active-site Proton acceptor is the aspartate 8. Residue aspartate 129 is the Proton donor of the active site.

This sequence belongs to the HisA/HisF family.

It localises to the cytoplasm. It carries out the reaction 1-(5-phospho-beta-D-ribosyl)-5-[(5-phospho-beta-D-ribosylamino)methylideneamino]imidazole-4-carboxamide = 5-[(5-phospho-1-deoxy-D-ribulos-1-ylimino)methylamino]-1-(5-phospho-beta-D-ribosyl)imidazole-4-carboxamide. The protein operates within amino-acid biosynthesis; L-histidine biosynthesis; L-histidine from 5-phospho-alpha-D-ribose 1-diphosphate: step 4/9. The polypeptide is 1-(5-phosphoribosyl)-5-[(5-phosphoribosylamino)methylideneamino] imidazole-4-carboxamide isomerase (Bacillus anthracis (strain A0248)).